Here is a 690-residue protein sequence, read N- to C-terminus: NF-kappa-B-repressing factor (690 aa).

The segment at 1 to 296 (MEKILHMAEG…FKHIIGEDLV (296 aa)) is active repression domain. Positions 25–45 (KPSKGQKRYLSTYDGQNPPKK) match the Nuclear localization signal motif. 3 disordered regions span residues 27-49 (SKGQKRYLSTYDGQNPPKKQAGS), 65-85 (SSSKAERQEDPYGPQTKDVNG), and 133-160 (YFDSGNPAPSSTSQQANCQPAPEPPPSQ). Lysine 68 participates in a covalent cross-link: Glycyl lysine isopeptide (Lys-Gly) (interchain with G-Cter in SUMO2). Residues 139-150 (PAPSSTSQQANC) are compositionally biased toward polar residues. Residues 296-388 (VVCQIGMLSY…RVFLQDHCLA (93 aa)) mediate DNA binding. Residues 414-425 (PTYPSVKSSQCH) are compositionally biased toward polar residues. The disordered stretch occupies residues 414–436 (PTYPSVKSSQCHSGSSPKGSGKK). Lysine 500 is covalently cross-linked (Glycyl lysine isopeptide (Lys-Gly) (interchain with G-Cter in SUMO2)). The G-patch domain maps to 551 to 596 (EDNIGNQLLRKMGWTGGGLGKSGEGIREPISVKEQHKREGLGLDVE). The R3H domain occupies 600–664 (KIAKRDIEQI…DRYLVVGRKR (65 aa)). Serine 618 is subject to Phosphoserine. Glycyl lysine isopeptide (Lys-Gly) (interchain with G-Cter in SUMO2) cross-links involve residues lysine 666 and lysine 674.

As to quaternary structure, interacts with NF-kappa-B. Interacts with XRN2. Interacts (via G-patch domain) with DHX15; promoting the RNA helicase activity of DHX15.

It is found in the nucleus. It localises to the nucleolus. In terms of biological role, enhances the ATPase activity of DHX15 by acting like a brace that tethers mobile sections of DHX15 together, stabilizing a functional conformation with high RNA affinity of DHX15. Involved in the constitutive silencing of the interferon beta promoter, independently of the virus-induced signals, and in the inhibition of the basal and cytokine-induced iNOS promoter activity. Also involved in the regulation of IL-8 transcription. May also act as a DNA-binding transcription regulator: interacts with a specific negative regulatory element (NRE) 5'-AATTCCTCTGA-3' to mediate transcriptional repression of certain NK-kappa-B responsive genes. The sequence is that of NF-kappa-B-repressing factor (Nkrf) from Mus musculus (Mouse).